Here is a 156-residue protein sequence, read N- to C-terminus: Small ribosomal subunit protein uS7 (156 aa).

It belongs to the universal ribosomal protein uS7 family. Part of the 30S ribosomal subunit. Contacts proteins S9 and S11.

In terms of biological role, one of the primary rRNA binding proteins, it binds directly to 16S rRNA where it nucleates assembly of the head domain of the 30S subunit. Is located at the subunit interface close to the decoding center, probably blocks exit of the E-site tRNA. The protein is Small ribosomal subunit protein uS7 of Desulfovibrio desulfuricans (strain ATCC 27774 / DSM 6949 / MB).